The chain runs to 370 residues: Probable pectin lyase E (370 aa).

A disulfide bond links C75 and C96. R245 is a catalytic residue. N307 is a glycosylation site (N-linked (GlcNAc...) asparagine). C311 and C319 are oxidised to a cystine.

The protein belongs to the polysaccharide lyase 1 family.

Its subcellular location is the secreted. The enzyme catalyses Eliminative cleavage of (1-&gt;4)-alpha-D-galacturonan methyl ester to give oligosaccharides with 4-deoxy-6-O-methyl-alpha-D-galact-4-enuronosyl groups at their non-reducing ends.. In terms of biological role, pectinolytic enzymes consist of four classes of enzymes: pectin lyase, polygalacturonase, pectin methylesterase and rhamnogalacturonase. Among pectinolytic enzymes, pectin lyase is the most important in depolymerization of pectin, since it cleaves internal glycosidic bonds of highly methylated pectins. This chain is Probable pectin lyase E (pelE), found in Aspergillus niger.